The primary structure comprises 475 residues: Phosphoglucosamine mutase (475 aa).

Catalysis depends on serine 126, which acts as the Phosphoserine intermediate. Residues serine 126, aspartate 265, aspartate 267, and aspartate 269 each contribute to the Mg(2+) site. Serine 126 carries the phosphoserine modification.

It belongs to the phosphohexose mutase family. Requires Mg(2+) as cofactor. Post-translationally, activated by phosphorylation.

The catalysed reaction is alpha-D-glucosamine 1-phosphate = D-glucosamine 6-phosphate. Functionally, catalyzes the conversion of glucosamine-6-phosphate to glucosamine-1-phosphate. The sequence is that of Phosphoglucosamine mutase from Synechococcus sp. (strain ATCC 27144 / PCC 6301 / SAUG 1402/1) (Anacystis nidulans).